The chain runs to 358 residues: Dual-specificity RNA methyltransferase RlmN (358 aa).

Glu-91 acts as the Proton acceptor in catalysis. Positions 102-337 (GNIRITQCLS…TILRKSKGQD (236 aa)) constitute a Radical SAM core domain. Residues Cys-109 and Cys-342 are joined by a disulfide bond. The [4Fe-4S] cluster site is built by Cys-116, Cys-120, and Cys-123. S-adenosyl-L-methionine is bound by residues 169–170 (GE), Ser-201, 223–225 (SLH), and Asn-299. The active-site S-methylcysteine intermediate is Cys-342.

Belongs to the radical SAM superfamily. RlmN family. It depends on [4Fe-4S] cluster as a cofactor.

The protein resides in the cytoplasm. The catalysed reaction is adenosine(2503) in 23S rRNA + 2 reduced [2Fe-2S]-[ferredoxin] + 2 S-adenosyl-L-methionine = 2-methyladenosine(2503) in 23S rRNA + 5'-deoxyadenosine + L-methionine + 2 oxidized [2Fe-2S]-[ferredoxin] + S-adenosyl-L-homocysteine. The enzyme catalyses adenosine(37) in tRNA + 2 reduced [2Fe-2S]-[ferredoxin] + 2 S-adenosyl-L-methionine = 2-methyladenosine(37) in tRNA + 5'-deoxyadenosine + L-methionine + 2 oxidized [2Fe-2S]-[ferredoxin] + S-adenosyl-L-homocysteine. Functionally, specifically methylates position 2 of adenine 2503 in 23S rRNA and position 2 of adenine 37 in tRNAs. m2A2503 modification seems to play a crucial role in the proofreading step occurring at the peptidyl transferase center and thus would serve to optimize ribosomal fidelity. The sequence is that of Dual-specificity RNA methyltransferase RlmN from Lawsonia intracellularis (strain PHE/MN1-00).